Reading from the N-terminus, the 297-residue chain is HTH-type transcriptional regulator ArgP (297 aa).

An HTH lysR-type domain is found at 4 to 60 (PDYRTLQALDAVIRERGFERAAQKLCITQSAVSQRIKQLENLFGQPLLVRTIPPRPT). A DNA-binding region (H-T-H motif) is located at residues 21 to 40 (FERAAQKLCITQSAVSQRIK).

It belongs to the LysR transcriptional regulatory family. In terms of assembly, homodimer.

Functionally, controls the transcription of genes involved in arginine and lysine metabolism. The chain is HTH-type transcriptional regulator ArgP from Pectobacterium carotovorum subsp. carotovorum (strain PC1).